A 562-amino-acid chain; its full sequence is MFS-type efflux pump elcC (562 aa).

11 helical membrane passes run 50-70, 80-100, 111-131, 139-159, 184-204, 215-235, 257-277, 288-308, 309-329, 351-371, and 383-403; these read WVFL…GAAP, VVAG…VAEF, GMLG…GGAF, LCFY…FLLV, LYGL…TQWG, IIAL…IEIW, IFSF…PLWF, SGIH…AAGG, MVFG…LAAV, VLYG…IQAA, and VVIF…QNVF. Asparagine 448 carries an N-linked (GlcNAc...) asparagine glycan. A helical membrane pass occupies residues 455 to 475; the sequence is FYVAVATAGLSMAGSILIPWL. A disordered region spans residues 515–562; it reads EIASEDSQSSDIEKVPRNNEVSTYDSQTSEVEKSSVGSTNRKVESIRN. Over residues 533–554 the composition is skewed to polar residues; it reads NEVSTYDSQTSEVEKSSVGSTN.

The protein belongs to the major facilitator superfamily. TCR/Tet family.

It localises to the cell membrane. In terms of biological role, MFS-type efflux pump; part of the gene cluster that mediates the biosynthesis of elsinochrome C, a perelyenequinone phytotoxin structurally similar to cercosporin. The polypeptide is MFS-type efflux pump elcC (Phaeosphaeria nodorum (strain SN15 / ATCC MYA-4574 / FGSC 10173) (Glume blotch fungus)).